We begin with the raw amino-acid sequence, 325 residues long: DNA-directed RNA polymerase subunit alpha (325 aa).

The interval 1–239 is alpha N-terminal domain (alpha-NTD); it reads MQQFLRYNIN…DHLKPLIDIN (239 aa). The tract at residues 255 to 325 is alpha C-terminal domain (alpha-CTD); that stretch reads EKNKKLSIPI…ELYDLKLKNN (71 aa).

The protein belongs to the RNA polymerase alpha chain family. Homodimer. The RNAP catalytic core consists of 2 alpha, 1 beta, 1 beta' and 1 omega subunit. When a sigma factor is associated with the core the holoenzyme is formed, which can initiate transcription.

The catalysed reaction is RNA(n) + a ribonucleoside 5'-triphosphate = RNA(n+1) + diphosphate. In terms of biological role, DNA-dependent RNA polymerase catalyzes the transcription of DNA into RNA using the four ribonucleoside triphosphates as substrates. In Mycoplasmoides gallisepticum (strain R(low / passage 15 / clone 2)) (Mycoplasma gallisepticum), this protein is DNA-directed RNA polymerase subunit alpha.